Here is a 481-residue protein sequence, read N- to C-terminus: Subtilisin-like protease 1 (481 aa).

Positions 1–19 (MGVFRFISISLAAVSAANA) are cleaved as a signal peptide. A propeptide spanning residues 20 to 116 (AQILSMPHAQ…VEPDTIISVH (97 aa)) is cleaved from the precursor. The 82-residue stretch at 34–115 (SYIVMMKDDT…FVEPDTIISV (82 aa)) folds into the Inhibitor I9 domain. A Peptidase S8 domain is found at 126-400 (SWGLARISSS…NVLINNGGAK (275 aa)). Active-site charge relay system residues include D158 and H190. The segment at 175-198 (GSNQVNDGDDNDRSGHGTHTSGTM) is disordered. N251 is a glycosylation site (N-linked (GlcNAc...) asparagine). Positions 281–312 (GNDNTDARSSSPASEPSVCTVGASAEDDSRSS) are disordered. Positions 282–294 (NDNTDARSSSPAS) are enriched in polar residues. The active-site Charge relay system is the S345. The tract at residues 379–455 (ASISDVGPGT…HPHTPFPGGD (77 aa)) is disordered. Positions 424 to 450 (PQQPAPGEPSTPAPAPMPPTPQHPHTP) are enriched in pro residues.

Belongs to the peptidase S8 family.

The protein localises to the secreted. Functionally, secreted subtilisin-like serine protease with keratinolytic activity that contributes to pathogenicity. The sequence is that of Subtilisin-like protease 1 (SUB1) from Arthroderma gypseum (strain ATCC MYA-4604 / CBS 118893) (Microsporum gypseum).